The sequence spans 421 residues: Zinc finger protein Pegasus (421 aa).

The segment at 35–55 is disordered; it reads GDKEAETLQGAGTEGDQNGLD. 3 consecutive C2H2-type zinc fingers follow at residues 82-104, 110-132, and 138-161; these read LKCR…IRIH, HRCH…MRSH, and YKCE…RRKH. Positions 229–238 are enriched in polar residues; it reads SMTKSSQTSG. 2 disordered regions span residues 229-249 and 292-358; these read SMTK…LMVD and QPAT…PTLP. A compositionally biased stretch (low complexity) spans 292-313; that stretch reads QPATPAVVSSVSASIAQSSSPT. Residues 339–351 show a composition bias toward polar residues; it reads HTSTPSISNSQPS. 2 consecutive C2H2-type zinc fingers follow at residues 366-388 and 394-418; these read HHCQ…MGCH and FQCN…RGQH.

This sequence belongs to the Ikaros C2H2-type zinc-finger protein family. In terms of assembly, probably self-associates.

It is found in the nucleus. Transcriptional repressor that binds the core 5'GNNTGTNG-3' DNA consensus sequence. The polypeptide is Zinc finger protein Pegasus (IKZF5) (Gallus gallus (Chicken)).